Reading from the N-terminus, the 498-residue chain is ATP synthase subunit beta, chloroplastic (498 aa).

Position 172-179 (Gly-172–Thr-179) interacts with ATP.

It belongs to the ATPase alpha/beta chains family. As to quaternary structure, F-type ATPases have 2 components, CF(1) - the catalytic core - and CF(0) - the membrane proton channel. CF(1) has five subunits: alpha(3), beta(3), gamma(1), delta(1), epsilon(1). CF(0) has four main subunits: a(1), b(1), b'(1) and c(9-12).

Its subcellular location is the plastid. The protein localises to the chloroplast thylakoid membrane. The catalysed reaction is ATP + H2O + 4 H(+)(in) = ADP + phosphate + 5 H(+)(out). Produces ATP from ADP in the presence of a proton gradient across the membrane. The catalytic sites are hosted primarily by the beta subunits. The polypeptide is ATP synthase subunit beta, chloroplastic (Buxus microphylla (Littleleaf boxwood)).